A 155-amino-acid chain; its full sequence is Histone H2B.5 (155 aa).

Composition is skewed to basic and acidic residues over residues 1–28 (MAPK…EKAP) and 36–54 (EKRL…GKKD). Residues 1 to 63 (MAPKAEKKPA…DRAGRKKAKK (63 aa)) are disordered. N6-acetyllysine occurs at positions 7 and 37. Residue Lys-151 forms a Glycyl lysine isopeptide (Lys-Gly) (interchain with G-Cter in ubiquitin) linkage.

It belongs to the histone H2B family. The nucleosome is a histone octamer containing two molecules each of H2A, H2B, H3 and H4 assembled in one H3-H4 heterotetramer and two H2A-H2B heterodimers. The octamer wraps approximately 147 bp of DNA. Post-translationally, can be acetylated to form H2BK6ac and H2BK33ac. Monoubiquitinated by BRE1 to form H2BK143ub1 and deubiquitinated by UBP26. Required for heterochromatic histone H3 di- and trimethylation at H3K4me. May give a specific tag for epigenetic transcriptional activation.

The protein resides in the nucleus. It localises to the chromosome. Its function is as follows. Core component of nucleosome. Nucleosomes wrap and compact DNA into chromatin, limiting DNA accessibility to the cellular machineries which require DNA as a template. Histones thereby play a central role in transcription regulation, DNA repair, DNA replication and chromosomal stability. DNA accessibility is regulated via a complex set of post-translational modifications of histones, also called histone code, and nucleosome remodeling. This Oryza sativa subsp. japonica (Rice) protein is Histone H2B.5 (H2B.5).